The primary structure comprises 255 residues: Type III pantothenate kinase (255 aa).

6–13 (DIGNTNIK) contacts ATP. Position 107–110 (107–110 (GADR)) interacts with substrate. Asp-109 (proton acceptor) is an active-site residue. Thr-132 is a binding site for ATP. Residue Thr-184 participates in substrate binding.

The protein belongs to the type III pantothenate kinase family. In terms of assembly, homodimer. It depends on NH4(+) as a cofactor. K(+) is required as a cofactor.

The protein resides in the cytoplasm. The catalysed reaction is (R)-pantothenate + ATP = (R)-4'-phosphopantothenate + ADP + H(+). It functions in the pathway cofactor biosynthesis; coenzyme A biosynthesis; CoA from (R)-pantothenate: step 1/5. Catalyzes the phosphorylation of pantothenate (Pan), the first step in CoA biosynthesis. In Roseiflexus sp. (strain RS-1), this protein is Type III pantothenate kinase.